Consider the following 444-residue polypeptide: Exodeoxyribonuclease 7 large subunit (444 aa).

This sequence belongs to the XseA family. As to quaternary structure, heterooligomer composed of large and small subunits.

The protein resides in the cytoplasm. The catalysed reaction is Exonucleolytic cleavage in either 5'- to 3'- or 3'- to 5'-direction to yield nucleoside 5'-phosphates.. Functionally, bidirectionally degrades single-stranded DNA into large acid-insoluble oligonucleotides, which are then degraded further into small acid-soluble oligonucleotides. The polypeptide is Exodeoxyribonuclease 7 large subunit (Hahella chejuensis (strain KCTC 2396)).